The primary structure comprises 362 residues: Ribosome-binding ATPase YchF (362 aa).

The region spanning 2 to 258 (LSAGIVGLPN…LDANGRQDWL (257 aa)) is the OBG-type G domain. Residue 11 to 16 (NVGKST) participates in ATP binding. 2 residues coordinate Mg(2+): serine 15 and threonine 35. The TGS domain occupies 281 to 347 (GLWSFFTFGK…EAKKQGLVRL (67 aa)).

This sequence belongs to the TRAFAC class OBG-HflX-like GTPase superfamily. OBG GTPase family. YchF/OLA1 subfamily. The cofactor is Mg(2+).

Its function is as follows. ATPase that binds to both the 70S ribosome and the 50S ribosomal subunit in a nucleotide-independent manner. This chain is Ribosome-binding ATPase YchF, found in Mycoplasma pneumoniae (strain ATCC 29342 / M129 / Subtype 1) (Mycoplasmoides pneumoniae).